Reading from the N-terminus, the 122-residue chain is MIPGEYRLQPGSIACNSGRDAMVVEVVNRGDRPVQIGSHYHFAEANRALEFDREAAYGRRLDIPAGTAARFEPGDRKTVQLIELAGTREVHGLSNAVNGKLDGGTAVAGEPRPGIAAERDHQ.

The segment at 102-122 (DGGTAVAGEPRPGIAAERDHQ) is disordered.

It belongs to the urease beta subunit family. As to quaternary structure, heterotrimer of UreA (gamma), UreB (beta) and UreC (alpha) subunits. Three heterotrimers associate to form the active enzyme.

It is found in the cytoplasm. The enzyme catalyses urea + 2 H2O + H(+) = hydrogencarbonate + 2 NH4(+). It participates in nitrogen metabolism; urea degradation; CO(2) and NH(3) from urea (urease route): step 1/1. This chain is Urease subunit beta, found in Paenarthrobacter aurescens (strain TC1).